An 88-amino-acid chain; its full sequence is Small ribosomal subunit protein bS20 (88 aa).

Residues 1 to 25 (MANSAQARKRARQATKARAHNASLR) are disordered. Residues 7–19 (ARKRARQATKARA) are compositionally biased toward basic residues.

The protein belongs to the bacterial ribosomal protein bS20 family.

Its function is as follows. Binds directly to 16S ribosomal RNA. In Azoarcus sp. (strain BH72), this protein is Small ribosomal subunit protein bS20.